We begin with the raw amino-acid sequence, 321 residues long: Ribose import permease protein RbsC (321 aa).

Topologically, residues 1-22 (MTTQTVSGRRYFTKAWLMEQKS) are cytoplasmic. Residues 23–43 (LIALLVLIAIVSTLSPNFFTI) traverse the membrane as a helical segment. Residues 44 to 56 (NNLFNILQQTSVN) lie on the Periplasmic side of the membrane. A helical membrane pass occupies residues 57–77 (AIMAVGMTLVILTSGIDLSVG). Topologically, residues 78-125 (SLLALTGAVAASIVGIEVNALVAVAAALALGAAIGAVTGVIVAKGRVQ) are cytoplasmic. Residues 126 to 145 (AFIATLVMMLLLRGVTMVYT) form a helical membrane-spanning segment. Over 146–168 (NGSPVNTGFTENADLFGWFGIGR) the chain is Periplasmic. Residues 169–190 (PLGVPTPVWIMGIVFLAAWYML) traverse the membrane as a helical segment. Topologically, residues 191 to 220 (HHTRLGRYIYALGGNEAATRLSGINVNKIK) are cytoplasmic. Residues 221–240 (IIVYSLCGLLASLAGIIEVA) traverse the membrane as a helical segment. At 241–294 (RLSSAQPTAGTGYELDAIAAVVLGGTSLAGGKGRIVGTLIGALILGFLNNGLNL) the chain is on the periplasmic side. The helical transmembrane segment at 295–316 (LGVSSYYQMIVKAVVILLAVLV) threads the bilayer. Residues 317-321 (DNKKQ) lie on the Cytoplasmic side of the membrane.

The protein belongs to the binding-protein-dependent transport system permease family. AraH/RbsC subfamily. As to quaternary structure, the complex is composed of an ATP-binding protein (RbsA), two transmembrane proteins (RbsC) and a solute-binding protein (RbsB).

It localises to the cell inner membrane. Functionally, part of the ABC transporter complex RbsABC involved in ribose import. Probably responsible for the translocation of the substrate across the membrane. The sequence is that of Ribose import permease protein RbsC (rbsC) from Escherichia coli O157:H7.